The sequence spans 305 residues: Sulfate adenylyltransferase subunit 2 (305 aa).

The protein belongs to the PAPS reductase family. CysD subfamily. In terms of assembly, heterodimer composed of CysD, the smaller subunit, and CysN.

It catalyses the reaction sulfate + ATP + H(+) = adenosine 5'-phosphosulfate + diphosphate. It functions in the pathway sulfur metabolism; hydrogen sulfide biosynthesis; sulfite from sulfate: step 1/3. Functionally, with CysN forms the ATP sulfurylase (ATPS) that catalyzes the adenylation of sulfate producing adenosine 5'-phosphosulfate (APS) and diphosphate, the first enzymatic step in sulfur assimilation pathway. APS synthesis involves the formation of a high-energy phosphoric-sulfuric acid anhydride bond driven by GTP hydrolysis by CysN coupled to ATP hydrolysis by CysD. This chain is Sulfate adenylyltransferase subunit 2, found in Pseudomonas savastanoi pv. phaseolicola (strain 1448A / Race 6) (Pseudomonas syringae pv. phaseolicola (strain 1448A / Race 6)).